The following is a 118-amino-acid chain: uncharacterized protein (118 aa).

This is an uncharacterized protein from Escherichia coli O157:H7.